The chain runs to 43 residues: Potassium channel toxin gamma-KTx 4.11 (43 aa).

Intrachain disulfides connect Cys5–Cys23, Cys11–Cys34, Cys20–Cys39, and Cys24–Cys41.

It belongs to the ergtoxin family. Gamma-KTx 4 subfamily. As to expression, expressed by the venom gland.

Its subcellular location is the secreted. Its function is as follows. Reversibly blocks Kv11/ERG potassium channels. In Centruroides noxius (Mexican scorpion), this protein is Potassium channel toxin gamma-KTx 4.11.